The chain runs to 533 residues: CWF19-like protein 1 homolog (533 aa).

The segment at 290 to 314 (EMGGAEDGAGNGRKRHNDGGNDGPR) is disordered.

This sequence belongs to the CWF19 family.

The sequence is that of CWF19-like protein 1 homolog from Caenorhabditis elegans.